The sequence spans 77 residues: Large ribosomal subunit protein bL28 (77 aa).

The tract at residues 1–20 (MSRVCQVTGKGPVTGNNISH) is disordered.

It belongs to the bacterial ribosomal protein bL28 family.

This chain is Large ribosomal subunit protein bL28, found in Pseudomonas fluorescens (strain SBW25).